A 160-amino-acid chain; its full sequence is Cyclic pyranopterin monophosphate synthase (160 aa).

Substrate is bound by residues 75–77 and 113–114; these read LCH and ME. Aspartate 128 is an active-site residue.

It belongs to the MoaC family. In terms of assembly, homohexamer; trimer of dimers.

The catalysed reaction is (8S)-3',8-cyclo-7,8-dihydroguanosine 5'-triphosphate = cyclic pyranopterin phosphate + diphosphate. Its pathway is cofactor biosynthesis; molybdopterin biosynthesis. Catalyzes the conversion of (8S)-3',8-cyclo-7,8-dihydroguanosine 5'-triphosphate to cyclic pyranopterin monophosphate (cPMP). This is Cyclic pyranopterin monophosphate synthase from Sodalis glossinidius (strain morsitans).